The sequence spans 97 residues: Single insulin-like growth factor-binding domain protein-1 (97 aa).

A signal peptide spans 1–19; the sequence is MKTLFVFAVGIMLSMRASA. Residues 20 to 96 form the IGFBP N-terminal domain; it reads FTCPECRPEL…PEIVGTCVKI (77 aa). Thr21 is a glycosylation site (O-linked (GalNAc...) threonine). Cystine bridges form between Cys22–Cys45, Cys25–Cys47, Cys30–Cys48, Cys36–Cys51, Cys59–Cys75, and Cys69–Cys93.

Expressed in hemocytes.

It is found in the secreted. Functionally, has a role in the innate immune system. In Cupiennius salei (American wandering spider), this protein is Single insulin-like growth factor-binding domain protein-1.